Here is a 275-residue protein sequence, read N- to C-terminus: UDP-Gal:alpha-D-GlcNAc-diphosphoundecaprenol beta-1,3-galactosyltransferase (275 aa).

This sequence belongs to the glycosyltransferase 2 family. Mn(2+) serves as cofactor.

The protein localises to the cell inner membrane. It carries out the reaction N-acetyl-alpha-D-glucosaminyl-di-trans,octa-cis-undecaprenyl diphosphate + UDP-alpha-D-galactose = beta-D-Gal-(1-&gt;3)-alpha-D-GlcNAc-di-trans,octa-cis-undecaprenyl diphosphate + UDP + H(+). It participates in bacterial outer membrane biogenesis; LPS O-antigen biosynthesis. Catalyzes the addition of Gal, the second sugar moiety of the O7-antigen repeating unit, to GlcNAc-pyrophosphate-undecaprenol. The chain is UDP-Gal:alpha-D-GlcNAc-diphosphoundecaprenol beta-1,3-galactosyltransferase (wbbD) from Escherichia coli.